The sequence spans 213 residues: Large ribosomal subunit protein uL3 (213 aa).

Gln-151 is subject to N5-methylglutamine.

The protein belongs to the universal ribosomal protein uL3 family. In terms of assembly, part of the 50S ribosomal subunit. Forms a cluster with proteins L14 and L19. In terms of processing, methylated by PrmB.

Functionally, one of the primary rRNA binding proteins, it binds directly near the 3'-end of the 23S rRNA, where it nucleates assembly of the 50S subunit. The polypeptide is Large ribosomal subunit protein uL3 (Rhizobium johnstonii (strain DSM 114642 / LMG 32736 / 3841) (Rhizobium leguminosarum bv. viciae)).